Reading from the N-terminus, the 166-residue chain is Vasopressin-neurophysin 2-copeptin (166 aa).

The signal sequence occupies residues 1–19 (MPDATLPACFLGLLALTSA). An intrachain disulfide couples Cys20 to Cys25. Gly28 is subject to Glycine amide. Disulfide bonds link Cys41-Cys85, Cys44-Cys58, Cys52-Cys75, Cys59-Cys65, Cys92-Cys104, Cys98-Cys116, and Cys105-Cys110. N-linked (GlcNAc...) asparagine glycosylation occurs at Asn133.

Belongs to the vasopressin/oxytocin family. As to quaternary structure, interacts with vasopressin receptors V1bR/AVPR1B (Ki=85 pM), V1aR/AVPR1A (Ki=0.6 nM) and V2R/AVPR2 (Ki=4.9 nM). Interacts with oxytocin receptor (OXTR) (Ki=110 nM). A shorter neurophysin molecule (32-123) is called neurophysin-I and is derived from the complete protein (called neurophysin III) by proteolytic degradation (in vivo or after extraction).

The protein resides in the secreted. Neurophysin 2 specifically binds vasopressin. Functionally, vasopressin has a direct antidiuretic action on the kidney, it also causes vasoconstriction of the peripheral vessels. Acts by binding to vasopressin receptors (V1bR/AVPR1B, V1aR/AVPR1A, and V2R/AVPR2). In Sus scrofa (Pig), this protein is Vasopressin-neurophysin 2-copeptin (AVP).